The primary structure comprises 257 residues: Transmembrane protein C257L (257 aa).

2 helical membrane-spanning segments follow: residues 123–143 and 163–183; these read LELL…FTAL and IMIF…YVLV.

The protein belongs to the asfivirus C257R family.

It is found in the host membrane. The protein localises to the virion. The sequence is that of Transmembrane protein C257L from African swine fever virus (isolate Pig/Kenya/KEN-50/1950) (ASFV).